The sequence spans 201 residues: Peptidyl-tRNA hydrolase (201 aa).

Tyrosine 14 contacts tRNA. Catalysis depends on histidine 19, which acts as the Proton acceptor. TRNA-binding residues include tyrosine 64, asparagine 66, and asparagine 112.

It belongs to the PTH family. Monomer.

It is found in the cytoplasm. It catalyses the reaction an N-acyl-L-alpha-aminoacyl-tRNA + H2O = an N-acyl-L-amino acid + a tRNA + H(+). Functionally, hydrolyzes ribosome-free peptidyl-tRNAs (with 1 or more amino acids incorporated), which drop off the ribosome during protein synthesis, or as a result of ribosome stalling. Its function is as follows. Catalyzes the release of premature peptidyl moieties from peptidyl-tRNA molecules trapped in stalled 50S ribosomal subunits, and thus maintains levels of free tRNAs and 50S ribosomes. The sequence is that of Peptidyl-tRNA hydrolase from Bradyrhizobium sp. (strain ORS 278).